The primary structure comprises 562 residues: Serine palmitoyltransferase 2 (562 aa).

Residues 67-87 (PMLVAVLTYVGYGVLTLFGYL) form a helical membrane-spanning segment. N6-(pyridoxal phosphate)lysine is present on K379.

This sequence belongs to the class-II pyridoxal-phosphate-dependent aminotransferase family. As to quaternary structure, component of the serine palmitoyltransferase (SPT) complex, which is composed of SPTLC1, SPTLC2 or SPTLC3 and SPTSSA or SPTSSB. The heterodimer consisting of SPTLC1 and SPTLC2/SPTLC3 forms the catalytic core of the enzyme, while SPTSSA or SPTSSB subunits determine substrate specificity. SPT also interacts with ORMDL proteins, especially ORMDL3, which negatively regulate SPT activity in the presence of ceramides. Forms dimers of heterodimers with SPTLC1. It depends on pyridoxal 5'-phosphate as a cofactor. In terms of tissue distribution, widely expressed.

The protein localises to the endoplasmic reticulum membrane. It catalyses the reaction L-serine + hexadecanoyl-CoA + H(+) = 3-oxosphinganine + CO2 + CoA. It carries out the reaction octadecanoyl-CoA + L-serine + H(+) = 3-oxoeicosasphinganine + CO2 + CoA. The protein operates within lipid metabolism; sphingolipid metabolism. SPT complex catalytic activity is negatively regulated by ORMDL proteins, including ORMDL3, in the presence of ceramides. This mechanism allows to maintain ceramide levels at sufficient concentrations for the production of complex sphingolipids, but which prevents the accumulation of ceramides to levels that trigger apoptosis. Its function is as follows. Component of the serine palmitoyltransferase multisubunit enzyme (SPT) that catalyzes the initial and rate-limiting step in sphingolipid biosynthesis by condensing L-serine and activated acyl-CoA (most commonly palmitoyl-CoA) to form long-chain bases. The SPT complex is composed of SPTLC1, SPTLC2 or SPTLC3 and SPTSSA or SPTSSB. Within this complex, the heterodimer consisting of SPTLC1 and SPTLC2/SPTLC3 forms the catalytic core. The composition of the serine palmitoyltransferase (SPT) complex determines the substrate preference. The SPTLC1-SPTLC2-SPTSSA complex shows a strong preference for C16-CoA substrate, while the SPTLC1-SPTLC3-SPTSSA isozyme uses both C14-CoA and C16-CoA as substrates, with a slight preference for C14-CoA. The SPTLC1-SPTLC2-SPTSSB complex shows a strong preference for C18-CoA substrate, while the SPTLC1-SPTLC3-SPTSSB isozyme displays an ability to use a broader range of acyl-CoAs, without apparent preference. Crucial for adipogenesis. The polypeptide is Serine palmitoyltransferase 2 (Homo sapiens (Human)).